The following is a 123-amino-acid chain: 13 kDa major membrane protein (123 aa).

It is found in the cell membrane. This Francisella tularensis subsp. holarctica (strain LVS) protein is 13 kDa major membrane protein.